The primary structure comprises 398 residues: Argininosuccinate synthase (398 aa).

8–16 (AYSGGLDTS) provides a ligand contact to ATP. Y87 provides a ligand contact to L-citrulline. An ATP-binding site is contributed by G117. Residues T119, N123, and D124 each coordinate L-aspartate. N123 provides a ligand contact to L-citrulline. 4 residues coordinate L-citrulline: R127, S175, E260, and Y272.

The protein belongs to the argininosuccinate synthase family. Type 1 subfamily. Homotetramer.

The protein localises to the cytoplasm. The catalysed reaction is L-citrulline + L-aspartate + ATP = 2-(N(omega)-L-arginino)succinate + AMP + diphosphate + H(+). Its pathway is amino-acid biosynthesis; L-arginine biosynthesis; L-arginine from L-ornithine and carbamoyl phosphate: step 2/3. The polypeptide is Argininosuccinate synthase (Mycobacterium tuberculosis (strain ATCC 25618 / H37Rv)).